Reading from the N-terminus, the 654-residue chain is Integrator complex subunit 9 (654 aa).

7 residues coordinate 1D-myo-inositol hexakisphosphate: Met-1, Arg-2, Thr-18, Phe-19, Arg-504, Lys-508, and Arg-509.

The protein belongs to the metallo-beta-lactamase superfamily. RNA-metabolizing metallo-beta-lactamase-like family. INTS9 subfamily. Belongs to the multiprotein complex Integrator, at least composed of IntS1, IntS2, IntS3, IntS4, omd/IntS5, IntS6, defl/IntS7, IntS8, IntS9, IntS10, IntS11, IntS12, asun/IntS13, IntS14 and IntS15. The core complex associates with protein phosphatase 2A subunits mts/PP2A and Pp2A-29B, to form the Integrator-PP2A (INTAC) complex. Within the complex, interacts with IntS1 and IntS12. IntS9 is part of the RNA endonuclease subcomplex, composed of IntS4, IntS9, IntS11 and inositol hexakisphosphate (InsP6).

It is found in the nucleus. Its subcellular location is the cytoplasm. The protein resides in the cytosol. Component of the integrator complex, a multiprotein complex that terminates RNA polymerase II (Pol II) transcription in the promoter-proximal region of genes. The integrator complex provides a quality checkpoint during transcription elongation by driving premature transcription termination of transcripts that are unfavorably configured for transcriptional elongation: the complex terminates transcription by (1) catalyzing dephosphorylation of the C-terminal domain (CTD) of Pol II subunit Polr2A/Rbp1 and Spt5, and (2) degrading the exiting nascent RNA transcript via endonuclease activity. The integrator complex is also involved in the 3'-end processing of the U7 snRNA, and also the spliceosomal snRNAs U1, U2, U4 and U5. This is Integrator complex subunit 9 from Drosophila melanogaster (Fruit fly).